A 745-amino-acid chain; its full sequence is Phosphoribosylformylglycinamidine synthase subunit PurL (745 aa).

His54 is a catalytic residue. Residues Tyr57 and Lys96 each contribute to the ATP site. Mg(2+) is bound at residue Glu98. Substrate-binding positions include 99 to 102 (SHNH) and Arg121. His100 acts as the Proton acceptor in catalysis. Residue Asp122 participates in Mg(2+) binding. Substrate is bound at residue Gln250. Asp278 serves as a coordination point for Mg(2+). Substrate is bound at residue 322-324 (ESQ). The ATP site is built by Asp503 and Gly540. Mg(2+) is bound at residue Asn541. Ser543 lines the substrate pocket.

The protein belongs to the FGAMS family. In terms of assembly, monomer. Part of the FGAM synthase complex composed of 1 PurL, 1 PurQ and 2 PurS subunits.

The protein resides in the cytoplasm. It catalyses the reaction N(2)-formyl-N(1)-(5-phospho-beta-D-ribosyl)glycinamide + L-glutamine + ATP + H2O = 2-formamido-N(1)-(5-O-phospho-beta-D-ribosyl)acetamidine + L-glutamate + ADP + phosphate + H(+). It participates in purine metabolism; IMP biosynthesis via de novo pathway; 5-amino-1-(5-phospho-D-ribosyl)imidazole from N(2)-formyl-N(1)-(5-phospho-D-ribosyl)glycinamide: step 1/2. Functionally, part of the phosphoribosylformylglycinamidine synthase complex involved in the purines biosynthetic pathway. Catalyzes the ATP-dependent conversion of formylglycinamide ribonucleotide (FGAR) and glutamine to yield formylglycinamidine ribonucleotide (FGAM) and glutamate. The FGAM synthase complex is composed of three subunits. PurQ produces an ammonia molecule by converting glutamine to glutamate. PurL transfers the ammonia molecule to FGAR to form FGAM in an ATP-dependent manner. PurS interacts with PurQ and PurL and is thought to assist in the transfer of the ammonia molecule from PurQ to PurL. This chain is Phosphoribosylformylglycinamidine synthase subunit PurL, found in Helicobacter hepaticus (strain ATCC 51449 / 3B1).